An 88-amino-acid polypeptide reads, in one-letter code: Secretion system apparatus protein SsaS (88 aa).

2 helical membrane-spanning segments follow: residues 15–35 (WIVL…GVIV) and 55–75 (LLAI…ILLN).

Belongs to the FliQ/MopD/SpaQ family.

It localises to the cell membrane. Functionally, part of a type III secretion system. The chain is Secretion system apparatus protein SsaS (ssaS) from Salmonella typhimurium (strain LT2 / SGSC1412 / ATCC 700720).